A 78-amino-acid polypeptide reads, in one-letter code: Small ribosomal subunit protein bS18 (78 aa).

Belongs to the bacterial ribosomal protein bS18 family. Part of the 30S ribosomal subunit. Forms a tight heterodimer with protein bS6.

Binds as a heterodimer with protein bS6 to the central domain of the 16S rRNA, where it helps stabilize the platform of the 30S subunit. The chain is Small ribosomal subunit protein bS18 from Lacticaseibacillus casei (strain BL23) (Lactobacillus casei).